A 135-amino-acid chain; its full sequence is UPF0329 protein ECU07_1860/ECU10_0040/ECU11_2100 (135 aa).

Belongs to the UPF0329 family.

This chain is UPF0329 protein ECU07_1860/ECU10_0040/ECU11_2100, found in Encephalitozoon cuniculi (strain GB-M1) (Microsporidian parasite).